The primary structure comprises 474 residues: UDP-N-acetylmuramate--L-alanine ligase (474 aa).

116–122 (GTHGKTT) is a binding site for ATP.

It belongs to the MurCDEF family.

The protein resides in the cytoplasm. The enzyme catalyses UDP-N-acetyl-alpha-D-muramate + L-alanine + ATP = UDP-N-acetyl-alpha-D-muramoyl-L-alanine + ADP + phosphate + H(+). The protein operates within cell wall biogenesis; peptidoglycan biosynthesis. Cell wall formation. The protein is UDP-N-acetylmuramate--L-alanine ligase of Hyphomonas neptunium (strain ATCC 15444).